A 91-amino-acid chain; its full sequence is MAKGQSLQDPYLNALRRERIPVSIYLVNGIKLQGQIESFDQFVILLKNTVNQMVYKHAISTVVPARSVSHHNNNHHTTPTEAVENVETQAE.

In terms of domain architecture, Sm spans 9-68; it reads DPYLNALRRERIPVSIYLVNGIKLQGQIESFDQFVILLKNTVNQMVYKHAISTVVPARSV. A disordered region spans residues 68–91; the sequence is VSHHNNNHHTTPTEAVENVETQAE.

The protein belongs to the Hfq family. Homohexamer.

RNA chaperone that binds small regulatory RNA (sRNAs) and mRNAs to facilitate mRNA translational regulation in response to envelope stress, environmental stress and changes in metabolite concentrations. Also binds with high specificity to tRNAs. The polypeptide is RNA-binding protein Hfq (Haemophilus influenzae (strain 86-028NP)).